Reading from the N-terminus, the 450-residue chain is Bifunctional protein GlmU (450 aa).

The segment at 1-226 is pyrophosphorylase; that stretch reads MLAVAVLAAG…PDEVNGINNR (226 aa). Residues 7–10, Lys-21, Gln-73, and 78–79 contribute to the UDP-N-acetyl-alpha-D-glucosamine site; these read LAAG and GT. Position 103 (Asp-103) interacts with Mg(2+). Residues Gly-140, Glu-155, Asn-170, and Asn-224 each contribute to the UDP-N-acetyl-alpha-D-glucosamine site. Asn-224 is a Mg(2+) binding site. Positions 227-247 are linker; the sequence is QQLAQCETMLQERLRHHWMAE. Residues 248–450 are N-acetyltransferase; the sequence is GVTFVDPASC…IKENWAGPQG (203 aa). UDP-N-acetyl-alpha-D-glucosamine is bound by residues Arg-329 and Lys-347. Catalysis depends on His-359, which acts as the Proton acceptor. Positions 362 and 373 each coordinate UDP-N-acetyl-alpha-D-glucosamine. Residues Ala-376, 382 to 383, Ala-419, and Arg-436 each bind acetyl-CoA; that span reads NY.

This sequence in the N-terminal section; belongs to the N-acetylglucosamine-1-phosphate uridyltransferase family. The protein in the C-terminal section; belongs to the transferase hexapeptide repeat family. As to quaternary structure, homotrimer. Mg(2+) serves as cofactor.

It is found in the cytoplasm. The enzyme catalyses alpha-D-glucosamine 1-phosphate + acetyl-CoA = N-acetyl-alpha-D-glucosamine 1-phosphate + CoA + H(+). It carries out the reaction N-acetyl-alpha-D-glucosamine 1-phosphate + UTP + H(+) = UDP-N-acetyl-alpha-D-glucosamine + diphosphate. Its pathway is nucleotide-sugar biosynthesis; UDP-N-acetyl-alpha-D-glucosamine biosynthesis; N-acetyl-alpha-D-glucosamine 1-phosphate from alpha-D-glucosamine 6-phosphate (route II): step 2/2. It functions in the pathway nucleotide-sugar biosynthesis; UDP-N-acetyl-alpha-D-glucosamine biosynthesis; UDP-N-acetyl-alpha-D-glucosamine from N-acetyl-alpha-D-glucosamine 1-phosphate: step 1/1. The protein operates within bacterial outer membrane biogenesis; LPS lipid A biosynthesis. In terms of biological role, catalyzes the last two sequential reactions in the de novo biosynthetic pathway for UDP-N-acetylglucosamine (UDP-GlcNAc). The C-terminal domain catalyzes the transfer of acetyl group from acetyl coenzyme A to glucosamine-1-phosphate (GlcN-1-P) to produce N-acetylglucosamine-1-phosphate (GlcNAc-1-P), which is converted into UDP-GlcNAc by the transfer of uridine 5-monophosphate (from uridine 5-triphosphate), a reaction catalyzed by the N-terminal domain. The protein is Bifunctional protein GlmU of Synechococcus sp. (strain RCC307).